An 839-amino-acid polypeptide reads, in one-letter code: Taste receptor type 1 member 2 (839 aa).

The signal sequence occupies residues 1–19 (MRPRATTICSLFFLLRVLA). The Extracellular portion of the chain corresponds to 20 to 566 (EPAKNSDFYL…AFLEWHEAPT (547 aa)). Residues Asn-84, Asn-127, Asn-248, Asn-292, Asn-312, Asn-368, Asn-428, Asn-487, and Asn-527 are each glycosylated (N-linked (GlcNAc...) asparagine). The chain crosses the membrane as a helical span at residues 567–587 (IVVALLAALGFLSTLAILVIF). Residues 588–602 (WRHFQTPMVRSAGGP) lie on the Cytoplasmic side of the membrane. The helical transmembrane segment at 603 to 623 (MCFLMLTLLLVAYMVVPVYVG) threads the bilayer. The Extracellular portion of the chain corresponds to 624–635 (PPKVSTCFCRQA). Residues 636–656 (LFPLCFTICISCIAVRSFQIV) traverse the membrane as a helical segment. The Cytoplasmic segment spans residues 657–681 (CVFKMASRFPRAYSYWVRYQGPYVS). Residues 682–702 (MAFITVLKMVTVVIGMLATGL) form a helical membrane-spanning segment. The Extracellular segment spans residues 703–727 (NPTTRIDPDDPKIMIVSCNPNYRNS). The chain crosses the membrane as a helical span at residues 728–748 (LFFNTGLDLLLSVVGFSFAYM). Residues 749–760 (GKELPTNYNEAK) are Cytoplasmic-facing. A helical membrane pass occupies residues 761–781 (FITLSMTFYFTSSVSLCTFMS). At 782–784 (AYN) the chain is on the extracellular side. Residues 785–805 (GVLVTIMDLLVTVLNLLAISL) form a helical membrane-spanning segment. Residues 806 to 839 (GYFGPKCYMILFYPERNTPAYFNSMIQGYTMRRD) are Cytoplasmic-facing.

The protein belongs to the G-protein coupled receptor 3 family. TAS1R subfamily. As to quaternary structure, forms heterodimers with TAS1R3.

It localises to the cell membrane. In terms of biological role, putative taste receptor. TAS1R2/TAS1R3 recognizes diverse natural and synthetic sweeteners. This is Taste receptor type 1 member 2 (TAS1R2) from Macaca mulatta (Rhesus macaque).